Reading from the N-terminus, the 220-residue chain is Guanylate kinase (220 aa).

Residues G16–R195 form the Guanylate kinase-like domain. S23 to T30 contributes to the ATP binding site.

The protein belongs to the guanylate kinase family.

It is found in the cytoplasm. The enzyme catalyses GMP + ATP = GDP + ADP. Functionally, essential for recycling GMP and indirectly, cGMP. In Rhodopseudomonas palustris (strain ATCC BAA-98 / CGA009), this protein is Guanylate kinase.